Reading from the N-terminus, the 152-residue chain is Superoxide dismutase [Cu-Zn] (152 aa).

At S2 the chain carries N-acetylserine. The Cu cation site is built by H44, H46, and H61. The cysteines at positions 55 and 144 are disulfide-linked. Positions 61, 69, 78, and 81 each coordinate Zn(2+). H118 is a binding site for Cu cation.

It belongs to the Cu-Zn superoxide dismutase family. In terms of assembly, monomer. It depends on Cu cation as a cofactor. Zn(2+) serves as cofactor.

Its subcellular location is the cytoplasm. It carries out the reaction 2 superoxide + 2 H(+) = H2O2 + O2. Inhibited by KCN and diethyldithiocarbamate. In terms of biological role, destroys radicals which are normally produced within the cells and which are toxic to biological systems. The plasma superoxide dismutase has phagocytosis-stimulating activity and may play an important role in the biological defenses of the organism. This Halocynthia roretzi (Sea squirt) protein is Superoxide dismutase [Cu-Zn].